A 206-amino-acid chain; its full sequence is Dehydration-responsive element-binding protein 2D (206 aa).

Residues 13–40 (ANKKQRTVQASSRKGCMRGKGGPDNASC) form a disordered region. A DNA-binding region (AP2/ERF) is located at residues 41–98 (TYKGVRQRTWGKWVAEIREPNRGARLWLGTFDTSREAALAYDSAARKLYGPEAHLNLP). A disordered region spans residues 102-139 (RSYPKTASSPASQTTPSSNTGGKSSSDSESPCSSNEMS). Low complexity predominate over residues 107–139 (TASSPASQTTPSSNTGGKSSSDSESPCSSNEMS).

The protein belongs to the AP2/ERF transcription factor family. ERF subfamily.

It localises to the nucleus. Functionally, putative transcriptional activator that binds specifically to the DNA sequence 5'-[AG]CCGAC-3'. Binding to the C-repeat/DRE element mediates high salinity-inducible transcription. In Arabidopsis thaliana (Mouse-ear cress), this protein is Dehydration-responsive element-binding protein 2D (DREB2D).